Here is a 353-residue protein sequence, read N- to C-terminus: Photosystem II D2 protein (353 aa).

T2 is modified (N-acetylthreonine). At T2 the chain carries Phosphothreonine. Residues 41-61 (CAYFAVGGWFTGTTFVTSWYT) form a helical membrane-spanning segment. H118 lines the chlorophyll a pocket. The chain crosses the membrane as a helical span at residues 125-141 (GFMLRQFELARSVQLRP). Positions 130 and 143 each coordinate pheophytin a. Residues 153–166 (VFVSVFLIYPLGQS) traverse the membrane as a helical segment. Chlorophyll a is bound at residue H198. A helical transmembrane segment spans residues 208–228 (AALLCAIHGATVENTLFEDGD). A plastoquinone contacts are provided by H215 and F262. Position 215 (H215) interacts with Fe cation. H269 contributes to the Fe cation binding site. A helical transmembrane segment spans residues 279–295 (GLWMSALGVVGLALNLR).

The protein belongs to the reaction center PufL/M/PsbA/D family. As to quaternary structure, PSII is composed of 1 copy each of membrane proteins PsbA, PsbB, PsbC, PsbD, PsbE, PsbF, PsbH, PsbI, PsbJ, PsbK, PsbL, PsbM, PsbT, PsbX, PsbY, PsbZ, Psb30/Ycf12, at least 3 peripheral proteins of the oxygen-evolving complex and a large number of cofactors. It forms dimeric complexes. The D1/D2 heterodimer binds P680, chlorophylls that are the primary electron donor of PSII, and subsequent electron acceptors. It shares a non-heme iron and each subunit binds pheophytin, quinone, additional chlorophylls, carotenoids and lipids. There is also a Cl(-1) ion associated with D1 and D2, which is required for oxygen evolution. The PSII complex binds additional chlorophylls, carotenoids and specific lipids. serves as cofactor.

The protein localises to the plastid. It localises to the chloroplast thylakoid membrane. It catalyses the reaction 2 a plastoquinone + 4 hnu + 2 H2O = 2 a plastoquinol + O2. In terms of biological role, photosystem II (PSII) is a light-driven water:plastoquinone oxidoreductase that uses light energy to abstract electrons from H(2)O, generating O(2) and a proton gradient subsequently used for ATP formation. It consists of a core antenna complex that captures photons, and an electron transfer chain that converts photonic excitation into a charge separation. The D1/D2 (PsbA/PsbD) reaction center heterodimer binds P680, the primary electron donor of PSII as well as several subsequent electron acceptors. D2 is needed for assembly of a stable PSII complex. This is Photosystem II D2 protein from Jasminum nudiflorum (Winter jasmine).